The sequence spans 506 residues: ATP synthase subunit alpha, chloroplastic (506 aa).

Position 170–177 (170–177 (GDRQTGKT)) interacts with ATP. At threonine 257 the chain carries Phosphothreonine.

It belongs to the ATPase alpha/beta chains family. F-type ATPases have 2 components, CF(1) - the catalytic core - and CF(0) - the membrane proton channel. CF(1) has five subunits: alpha(3), beta(3), gamma(1), delta(1), epsilon(1). CF(0) has four main subunits: a, b, b' and c.

It localises to the plastid. The protein localises to the chloroplast thylakoid membrane. The enzyme catalyses ATP + H2O + 4 H(+)(in) = ADP + phosphate + 5 H(+)(out). In terms of biological role, produces ATP from ADP in the presence of a proton gradient across the membrane. The alpha chain is a regulatory subunit. This is ATP synthase subunit alpha, chloroplastic from Olimarabidopsis pumila (Dwarf rocket).